Consider the following 118-residue polypeptide: Large ribosomal subunit protein bL20 (118 aa).

The protein belongs to the bacterial ribosomal protein bL20 family.

Binds directly to 23S ribosomal RNA and is necessary for the in vitro assembly process of the 50S ribosomal subunit. It is not involved in the protein synthesizing functions of that subunit. This chain is Large ribosomal subunit protein bL20, found in Hydrogenovibrio crunogenus (strain DSM 25203 / XCL-2) (Thiomicrospira crunogena).